The following is a 187-amino-acid chain: Large ribosomal subunit protein uL10 (187 aa).

Belongs to the universal ribosomal protein uL10 family. Part of the ribosomal stalk of the 50S ribosomal subunit. The N-terminus interacts with L11 and the large rRNA to form the base of the stalk. The C-terminus forms an elongated spine to which L12 dimers bind in a sequential fashion forming a multimeric L10(L12)X complex.

Its function is as follows. Forms part of the ribosomal stalk, playing a central role in the interaction of the ribosome with GTP-bound translation factors. This chain is Large ribosomal subunit protein uL10, found in Roseiflexus castenholzii (strain DSM 13941 / HLO8).